A 2575-amino-acid polypeptide reads, in one-letter code: Non-reducing polyketide synthase pks11 (2575 aa).

Residues 89–228 form the Starter acyltransferase (SAT) domain; that stretch reads LANIILSPLV…ASKTVSTLQG (140 aa). Catalysis depends on Cys-129, which acts as the Nucleophile; for transacylase activity. Residue His-247 is the Proton donor/acceptor; for transacylase activity of the active site. Residues 373–790 enclose the Ketosynthase family 3 (KS3) domain; that stretch reads EDDIAVVGMS…GSNASAVVTE (418 aa). Active-site for beta-ketoacyl synthase activity residues include Cys-538, His-673, and His-713. The Malonyl-CoA:ACP transacylase (MAT) domain occupies 901-1192; that stretch reads FGGQISTYVG…TNMASRALGS (292 aa). Residues 1276–1409 form an N-terminal hotdog fold region; it reads PKGLWSFIDY…GQIIFVSTDN (134 aa). In terms of domain architecture, PKS/mFAS DH spans 1276–1586; it reads PKGLWSFIDY…YHKVAKATMS (311 aa). The tract at residues 1307 to 1584 is product template (PT) domain; it reads LVSGHIIAQT…VNYHKVAKAT (278 aa). His-1311 acts as the Proton acceptor; for dehydratase activity in catalysis. The interval 1437 to 1586 is C-terminal hotdog fold; sequence ADDIIQGRNI…YHKVAKATMS (150 aa). Asp-1493 functions as the Proton donor; for dehydratase activity in the catalytic mechanism. Residues 1597 to 1606 show a composition bias toward polar residues; that stretch reads TTSTSTNVKS. The tract at residues 1597-1636 is disordered; the sequence is TTSTSTNVKSSPAAAEGSSPVENGASGSGSKAKKTKSGAG. Residues 1637–1711 form the Carrier domain; the sequence is QDVVNKTKGL…GLVQIIKSTL (75 aa). Ser-1671 is subject to O-(pantetheine 4'-phosphoryl)serine. The interval 1713 to 1762 is disordered; sequence VSDDEEGSDQEGSEASSSESSTTFTPSTTATTVSDVEDNGNEKSIGKEKS. The span at 1714-1724 shows a compositional bias: acidic residues; it reads SDDEEGSDQEG. Over residues 1725-1746 the composition is skewed to low complexity; sequence SEASSSESSTTFTPSTTATTVS. Basic and acidic residues predominate over residues 1752–1762; sequence GNEKSIGKEKS. Residues 1835–2130 form a methyltransferase domain region; it reads LTRIPHDPQH…HIDWTDGNSP (296 aa). Residues 2204–2448 enclose the Thioester reductase (TE) domain; sequence ITGATGSLGS…LCWTPVDDVA (245 aa).

Requires pantetheine 4'-phosphate as cofactor.

It participates in secondary metabolite biosynthesis. Functionally, non-reducing polyketide synthase; part of the gene cluster that mediates the biosynthesis of mitorubrinol and mitorubrinic acid, two virulence factors that improve T.marneffei intracellular survival in macrophages. The two polyketide synthases pks12 and pks11 are probably responsible for sequential use in the biosynthesis of mitorubrinol and mitorubrinic acid. The first part of the biosynthesis is probably catalyzed by pks12, which synthesized orsellinic acid. This tetraketide is then used as a starter unit for pks11, which possesses a SAT domain, in the second part of the biosynthesis. Pks11, contains a methyltransferase domain, also served that methylates the products, using a methyl group from S-adenosylmethionine. This is Non-reducing polyketide synthase pks11 from Talaromyces marneffei (Penicillium marneffei).